The primary structure comprises 663 residues: Zinc finger protein GLI2 (663 aa).

A disordered region spans residues 159–186 (ISSNSNCISDSSQSKQSSESAVSSTVNP). The span at 160-182 (SSNSNCISDSSQSKQSSESAVSS) shows a compositional bias: low complexity. C2H2-type zinc fingers lie at residues 234 to 259 (TNCHWEGCTKEYDTQEQLVHHINNDH), 267 to 294 (FVCRWQDCTREQKPFKAQYMLVVHMRRH), 300 to 324 (HKCTFEGCSKAYSRLENLKTHLRSH), 330 to 355 (YVCEHEGCNKAFSNASDRAKHQNRTH), and 361 to 386 (YVCKIPGCTKRYTDPSSLRKHVKTVH). Disordered stretches follow at residues 374-440 (DPSS…MEDC), 452-481 (VMCQSSPGGQSSCSSEPSPLGSTNNNDSGV), 544-578 (CSWVNPAPQGRNTKLPPISGNGSILENSGGSSRTL), and 619-663 (SGIS…DIKL). Positions 386 to 402 (HGPDAHVTKKQRNDVHP) are enriched in basic and acidic residues. Positions 456–473 (SSPGGQSSCSSEPSPLGS) are enriched in low complexity. Composition is skewed to polar residues over residues 563 to 578 (GNGSILENSGGSSRTL) and 619 to 647 (SGISPYFSSRRSSEASQLGHRPNNTSSAD).

This sequence belongs to the GLI C2H2-type zinc-finger protein family.

It is found in the nucleus. Its subcellular location is the cytoplasm. The protein resides in the cell projection. The protein localises to the cilium. Its function is as follows. Functions as a transcription regulator in the hedgehog (Hh) pathway. Functions as a transcriptional activator. May also function as transcriptional repressor. Binds to the DNA sequence 5'-GAACCACCCA-3'. Is involved in the smoothened (SHH) signaling pathway. Required for normal skeleton development. This chain is Zinc finger protein GLI2, found in Gallus gallus (Chicken).